Reading from the N-terminus, the 88-residue chain is L-amino-acid oxidase (88 aa).

Residues glutamate 74 and 81 to 86 contribute to the FAD site; that span reads GWIDST. 81–82 is a binding site for substrate; sequence GW.

This sequence belongs to the flavin monoamine oxidase family. FIG1 subfamily. Homodimer; non-covalently linked. Requires FAD as cofactor. N-glycosylated. In terms of tissue distribution, expressed by the venom gland.

It is found in the secreted. It catalyses the reaction an L-alpha-amino acid + O2 + H2O = a 2-oxocarboxylate + H2O2 + NH4(+). It carries out the reaction L-leucine + O2 + H2O = 4-methyl-2-oxopentanoate + H2O2 + NH4(+). The enzyme catalyses L-phenylalanine + O2 + H2O = 3-phenylpyruvate + H2O2 + NH4(+). The catalysed reaction is L-tryptophan + O2 + H2O = indole-3-pyruvate + H2O2 + NH4(+). It catalyses the reaction L-methionine + O2 + H2O = 4-methylsulfanyl-2-oxobutanoate + H2O2 + NH4(+). It carries out the reaction L-isoleucine + O2 + H2O = (S)-3-methyl-2-oxopentanoate + H2O2 + NH4(+). The enzyme catalyses L-arginine + O2 + H2O = 5-guanidino-2-oxopentanoate + H2O2 + NH4(+). The catalysed reaction is L-histidine + O2 + H2O = 3-(imidazol-5-yl)pyruvate + H2O2 + NH4(+). It catalyses the reaction L-asparagine + O2 + H2O = 2-oxosuccinamate + H2O2 + NH4(+). It carries out the reaction L-valine + O2 + H2O = 3-methyl-2-oxobutanoate + H2O2 + NH4(+). The enzyme catalyses L-glutamate + O2 + H2O = H2O2 + 2-oxoglutarate + NH4(+). Functionally, catalyzes an oxidative deamination of predominantly hydrophobic and aromatic L-amino acids, thus producing hydrogen peroxide that may contribute to the diverse toxic effects of this enzyme. Is highly active on L-Met, L-Leu, L-Phe, L-Ile, and L-Arg, moderately active on L-His, L-Trp, L-Asn, L-Glu, and L-Val, and weakly or not active on L-Gln, L-Lys, L-Asp, L-Ala, L-Tyr, L-Ser, L-Pro, L-Gly, L-Thr, and L-Cys. Exhibits diverse biological activities, such as hemorrhage, hemolysis, edema, apoptosis of vascular endothelial cells or tumor cell lines, antibacterial and antiparasitic activities. In addition, this protein has an ability to induce apoptosis in cultured HeLa and K562 cells, and inhibits ADP-induced platelet aggregation dose-dependently. Effects of snake L-amino oxidases on platelets are controversial, since they either induce aggregation or inhibit agonist-induced aggregation. These different effects are probably due to different experimental conditions. The chain is L-amino-acid oxidase from Vipera berus berus (Common viper).